A 67-amino-acid chain; its full sequence is Large ribosomal subunit protein uL30 (67 aa).

The protein belongs to the universal ribosomal protein uL30 family. As to quaternary structure, part of the 50S ribosomal subunit.

The polypeptide is Large ribosomal subunit protein uL30 (Thermotoga petrophila (strain ATCC BAA-488 / DSM 13995 / JCM 10881 / RKU-1)).